Consider the following 232-residue polypeptide: Very-long-chain (3R)-3-hydroxyacyl-CoA dehydratase 4 (232 aa).

Residues 1 to 19 lie on the Cytoplasmic side of the membrane; sequence MGPSVLPAWLQPRYRKNVY. The chain crosses the membrane as a helical span at residues 20–40; that stretch reads LFIYYLIQFCGHSWILANMTV. Residues 41–56 are Lumenal-facing; it reads RFFSFGKDSMADTFYA. A helical membrane pass occupies residues 57-77; sequence IGLVMRVCQSISLLELLHIYI. Over 78-112 the chain is Cytoplasmic; sequence GIESNQLFPRFLQLTERVIILFGVITSQEEVQEKC. A helical transmembrane segment spans residues 113–133; it reads VVCVLFILWNLLDMVRYTYSM. Over 134–135 the chain is Lumenal; it reads LS. A helical membrane pass occupies residues 136–156; sequence VIGTSYAALTWLSQTLWMPIY. The active site involves Y156. Residue P157 is a topological domain, cytoplasmic. A helical membrane pass occupies residues 158 to 178; the sequence is LCVLAEAFTIYQSLPYFESFG. Residue E163 is part of the active site. Residues 179-189 are Lumenal-facing; sequence TNSTVLPFDLS. The chain crosses the membrane as a helical span at residues 190 to 210; that stretch reads TCFPYVLKLYLMMLFIGMYFT. The Cytoplasmic segment spans residues 211-232; it reads YSHLYTERKDFLRVFSVKQKNV.

Belongs to the very long-chain fatty acids dehydratase HACD family. In terms of assembly, may interact with enzymes of the ELO family (including ELOVL1); with those enzymes that mediate condensation, the first of the four steps of the reaction cycle responsible for fatty acids elongation, may be part of a larger fatty acids elongase complex.

Its subcellular location is the endoplasmic reticulum membrane. It carries out the reaction a very-long-chain (3R)-3-hydroxyacyl-CoA = a very-long-chain (2E)-enoyl-CoA + H2O. The enzyme catalyses (3R)-hydroxyhexadecanoyl-CoA = (2E)-hexadecenoyl-CoA + H2O. The protein operates within lipid metabolism; fatty acid biosynthesis. In terms of biological role, catalyzes the third of the four reactions of the long-chain fatty acids elongation cycle. This endoplasmic reticulum-bound enzymatic process, allows the addition of two carbons to the chain of long- and very long-chain fatty acids/VLCFAs per cycle. This enzyme catalyzes the dehydration of the 3-hydroxyacyl-CoA intermediate into trans-2,3-enoyl-CoA, within each cycle of fatty acid elongation. Thereby, it participates in the production of VLCFAs of different chain lengths that are involved in multiple biological processes as precursors of membrane lipids and lipid mediators. The protein is Very-long-chain (3R)-3-hydroxyacyl-CoA dehydratase 4 of Mus musculus (Mouse).